We begin with the raw amino-acid sequence, 173 residues long: MIDSDGFRANVGIIICNRSGQVMWARRFGQHSWQFPQGGVDEGESAEEAMYRELYEEVGLRPEHVQILASTRSWLRYRLPKRLIRQDSKPVCIGQKQKWFLLQLKSSENAIDLNACGHPEFDDWRWVSYWYPVRQVVSFKRDVYRKVMKEFAPTTLPLQVKESNHKRRGMRRN.

Positions 6–149 (GFRANVGIII…KRDVYRKVMK (144 aa)) constitute a Nudix hydrolase domain. Residues 38–59 (GGVDEGESAEEAMYRELYEEVG) carry the Nudix box motif.

This sequence belongs to the Nudix hydrolase family. RppH subfamily. A divalent metal cation is required as a cofactor.

In terms of biological role, accelerates the degradation of transcripts by removing pyrophosphate from the 5'-end of triphosphorylated RNA, leading to a more labile monophosphorylated state that can stimulate subsequent ribonuclease cleavage. The chain is RNA pyrophosphohydrolase from Shewanella piezotolerans (strain WP3 / JCM 13877).